A 734-amino-acid chain; its full sequence is Alpha-catulin (734 aa).

Phosphoserine is present on residues Ser-374 and Ser-538.

It belongs to the vinculin/alpha-catenin family. As to quaternary structure, interacts with ARHGEF1. Interacts with DTNA. The interaction is required for correct localization of both CTNL1 and DTNA. As to expression, widely expressed. Expressed at lower level in neural tissues and at the highest level in the adrenal gland.

Its subcellular location is the cytoplasm. The protein localises to the cytoskeleton. The protein resides in the cell membrane. May modulate the Rho pathway signaling by providing a scaffold for the Lbc Rho guanine nucleotide exchange factor (ARHGEF1). This is Alpha-catulin (CTNNAL1) from Homo sapiens (Human).